The chain runs to 159 residues: UPF0336 protein ML1910 (159 aa).

The protein belongs to the UPF0336 family.

The protein is UPF0336 protein ML1910 of Mycobacterium leprae (strain TN).